A 151-amino-acid polypeptide reads, in one-letter code: 3-hydroxyacyl-[acyl-carrier-protein] dehydratase FabZ (151 aa).

The active site involves H56.

Belongs to the thioester dehydratase family. FabZ subfamily.

Its subcellular location is the cytoplasm. It carries out the reaction a (3R)-hydroxyacyl-[ACP] = a (2E)-enoyl-[ACP] + H2O. In terms of biological role, involved in unsaturated fatty acids biosynthesis. Catalyzes the dehydration of short chain beta-hydroxyacyl-ACPs and long chain saturated and unsaturated beta-hydroxyacyl-ACPs. In Rhodopseudomonas palustris (strain HaA2), this protein is 3-hydroxyacyl-[acyl-carrier-protein] dehydratase FabZ.